The primary structure comprises 272 residues: MSDMRLIVAGAGGRMGRTLIHALHEADGAALVGALEAPGSELLGQDSGLLAGLGPNGIPVSADLWSLSKDADGIIDFTVPAATIANVAIAAERGIVHVIGTTGLSASDNAVIKSVTSRAIVVQSGNMSLGVNLLAALVKQVAKSLDEDFDIEILEMHHRAKIDAPSGTAYLLGQAAADGRGVPLEEKSVRSRDGFTGARGRGDIGFATLRGGTVTGEHSVIFAGPYERIELTHRAEDRMIFARGAVKAACWARGRKPGLYSMADVLGLGSQS.

Residues 10–15 (GAGGRM), E36, 100–102 (GTT), and 124–127 (SGNM) contribute to the NAD(+) site. H157 functions as the Proton donor/acceptor in the catalytic mechanism. H158 lines the (S)-2,3,4,5-tetrahydrodipicolinate pocket. K161 acts as the Proton donor in catalysis. Position 167-168 (167-168 (GT)) interacts with (S)-2,3,4,5-tetrahydrodipicolinate.

Belongs to the DapB family.

It is found in the cytoplasm. It carries out the reaction (S)-2,3,4,5-tetrahydrodipicolinate + NAD(+) + H2O = (2S,4S)-4-hydroxy-2,3,4,5-tetrahydrodipicolinate + NADH + H(+). The enzyme catalyses (S)-2,3,4,5-tetrahydrodipicolinate + NADP(+) + H2O = (2S,4S)-4-hydroxy-2,3,4,5-tetrahydrodipicolinate + NADPH + H(+). It functions in the pathway amino-acid biosynthesis; L-lysine biosynthesis via DAP pathway; (S)-tetrahydrodipicolinate from L-aspartate: step 4/4. Functionally, catalyzes the conversion of 4-hydroxy-tetrahydrodipicolinate (HTPA) to tetrahydrodipicolinate. This chain is 4-hydroxy-tetrahydrodipicolinate reductase, found in Afipia carboxidovorans (strain ATCC 49405 / DSM 1227 / KCTC 32145 / OM5) (Oligotropha carboxidovorans).